The following is a 399-amino-acid chain: Glutathione-independent formaldehyde dehydrogenase (399 aa).

Cysteine 47 contacts Zn(2+). Positions 48, 49, and 52 each coordinate NAD(+). Residues histidine 68, cysteine 98, cysteine 101, cysteine 104, cysteine 112, and aspartate 170 each coordinate Zn(2+). The NAD(+) site is built by valine 198, aspartate 218, arginine 223, valine 263, arginine 268, histidine 270, proline 300, leucine 302, glycine 337, and threonine 339.

Belongs to the zinc-containing alcohol dehydrogenase family. Homotetramer. Requires Zn(2+) as cofactor.

It catalyses the reaction formaldehyde + NAD(+) + H2O = formate + NADH + 2 H(+). The catalysed reaction is acetaldehyde + NAD(+) + H2O = acetate + NADH + 2 H(+). It carries out the reaction 2 formaldehyde + H2O = methanol + formate + H(+). With respect to regulation, inactivated by bipyridine and p-chloromercuribenzoate. Dehydrogenase that catalyzes the NAD(+)-dependent oxidation of formaldehyde and acetaldehyde, and, to a lesser extent, long-chain alcohols, but is inactive against propionaldehyde, butyraldehyde, methanol and ethanol. Can also catalyze the dismutation of a wide range of aldehydes such as formaldehyde. This chain is Glutathione-independent formaldehyde dehydrogenase, found in Pseudomonas putida (Arthrobacter siderocapsulatus).